Consider the following 321-residue polypeptide: Endochitinase 33 (321 aa).

The N-terminal stretch at 1-19 (MPSLTALASLLALVPSALA) is a signal peptide. The GH18 domain occupies 27–321 (QNIAVYWGQN…FETQVVNALR (295 aa)). Glu167 functions as the Proton donor in the catalytic mechanism.

This sequence belongs to the glycosyl hydrolase 18 family. Chitinase class III subfamily. As to quaternary structure, monomer.

The protein resides in the secreted. The catalysed reaction is Random endo-hydrolysis of N-acetyl-beta-D-glucosaminide (1-&gt;4)-beta-linkages in chitin and chitodextrins.. Functionally, secreted chitinase involved in the degradation of chitin, a component of the cell walls of fungi and exoskeletal elements of some animals (including worms and arthropods). Plays a morphogenetic role during apical growth, cell division and differentiation (cell wall morphogenesis). May be involved in the degradation and further assimilation of phytopathogenic fungi, namely mycoparasitism, the major mechanism accounting for the antagonistic activity against phytopathogenic fungi displayed by Trichoderma. This chain is Endochitinase 33 (chit33), found in Trichoderma harzianum (Hypocrea lixii).